Here is a 747-residue protein sequence, read N- to C-terminus: Fibroblast growth factor receptor (747 aa).

The first 24 residues, 1–24, serve as a signal peptide directing secretion; that stretch reads MIQLQNTFIFIALTIFTSASTTSL. Residues 25–288 are Extracellular-facing; sequence KNETKPLNTI…TEEIPQDTHY (264 aa). N-linked (GlcNAc...) asparagine glycosylation is found at Asn-26, Asn-42, and Asn-63. The segment at 47-68 is disordered; sequence EEDLFDTNGAPKSDTVNASTTT. 2 consecutive Ig-like C2-type domains span residues 74–167 and 175–267; these read PRWV…YELD and PPVL…AWLT. A disulfide bridge links Cys-99 with Cys-151. N-linked (GlcNAc...) asparagine glycans are attached at residues Asn-161, Asn-185, Asn-217, Asn-227, and Asn-240. Cys-198 and Cys-251 are oxidised to a cystine. A helical membrane pass occupies residues 289–309; the sequence is LIYIFGVVCFIILLAFIVYMC. The Cytoplasmic portion of the chain corresponds to 310 to 747; that stretch reads NSRYQNKDPP…NGHARMQSDV (438 aa). Residues 377-660 form the Protein kinase domain; the sequence is ILLHERIDEG…QLVEDLDRML (284 aa). Residues 383–391 and Lys-412 each bind ATP; that span reads IDEGFFGQV. Asp-525 functions as the Proton acceptor in the catalytic mechanism. Tyr-556 bears the Phosphotyrosine; by autocatalysis mark. A disordered region spans residues 679–731; it reads YLPSDVDSNEDTESRDSANATGEDSDSVFEPIDGHGAHAYEVDEAGPLLNPQP. The segment covering 710–719 has biased composition (basic and acidic residues); the sequence is IDGHGAHAYE.

This sequence belongs to the protein kinase superfamily. Tyr protein kinase family. Fibroblast growth factor receptor subfamily.

The protein resides in the membrane. The enzyme catalyses L-tyrosyl-[protein] + ATP = O-phospho-L-tyrosyl-[protein] + ADP + H(+). Receptor for basic fibroblast growth factor. The sequence is that of Fibroblast growth factor receptor (FGFR) from Ciona intestinalis (Transparent sea squirt).